Consider the following 263-residue polypeptide: tRNA pseudouridine synthase A (263 aa).

Asp-57 serves as the catalytic Nucleophile. A substrate-binding site is contributed by Tyr-115.

It belongs to the tRNA pseudouridine synthase TruA family. In terms of assembly, homodimer.

The enzyme catalyses uridine(38/39/40) in tRNA = pseudouridine(38/39/40) in tRNA. Functionally, formation of pseudouridine at positions 38, 39 and 40 in the anticodon stem and loop of transfer RNAs. In Buchnera aphidicola subsp. Schizaphis graminum (strain Sg), this protein is tRNA pseudouridine synthase A.